Reading from the N-terminus, the 550-residue chain is Chaperonin GroEL (550 aa).

ATP is bound by residues 30–33, Lys51, 87–91, Gly415, 481–483, and Asp497; these read TLGP, DGTTT, and NAA.

This sequence belongs to the chaperonin (HSP60) family. Forms a cylinder of 14 subunits composed of two heptameric rings stacked back-to-back. Interacts with the co-chaperonin GroES.

The protein localises to the cytoplasm. It carries out the reaction ATP + H2O + a folded polypeptide = ADP + phosphate + an unfolded polypeptide.. Together with its co-chaperonin GroES, plays an essential role in assisting protein folding. The GroEL-GroES system forms a nano-cage that allows encapsulation of the non-native substrate proteins and provides a physical environment optimized to promote and accelerate protein folding. This Photobacterium profundum (strain SS9) protein is Chaperonin GroEL.